A 1220-amino-acid chain; its full sequence is Formin-F (1220 aa).

A compositionally biased stretch (basic residues) spans 1–10 (MNRIFGRKKK). Residues 1–62 (MNRIFGRKKK…TNSKSADKFD (62 aa)) are disordered. The region spanning 6–373 (GRKKKDKDSD…QISVNKPMIG (368 aa)) is the GBD/FH3 domain. Residues 11 to 20 (DKDSDEKGST) show a composition bias toward basic and acidic residues. A compositionally biased stretch (polar residues) spans 41–56 (AYSSLQPDGNNSTNSK). Residues 392–428 (VALQSEFQKNIEELAKVKDQLKKANFDLNIANQELSS) are a coiled coil. 3 disordered regions span residues 461–659 (IDSN…KFTV), 711–732 (SQKKLEASDKKSTSSTKPGTVS), and 1049–1192 (DEAK…KKDI). Low complexity-rich tracts occupy residues 501-518 (SKPPLNPKSSKPPISSSQ) and 525-554 (SNLSSSSSDSLSNDFKSQVEVAQQQQPQQQ). The 124-residue stretch at 532 to 655 (SDSLSNDFKS…NSNKPPANAP (124 aa)) folds into the FH1 domain. The segment covering 555-564 (NIESTLTPEP) has biased composition (polar residues). Over residues 575-638 (TTPPPAPPAP…GKGGPPPPPG (64 aa)) the composition is skewed to pro residues. The FH2 domain maps to 656-1054 (KFTVSKPTTK…AIKRDEAKAK (399 aa)). The segment covering 711–722 (SQKKLEASDKKS) has biased composition (basic and acidic residues). Residues 1032–1062 (YKDFQRDKEAAERAIKRDEAKAKKAQQLKRM) adopt a coiled-coil conformation. The span at 1066 to 1083 (IASSTNNKNPLASSSTSV) shows a compositional bias: polar residues. The 76-residue stretch at 1083 to 1158 (VGDGGMVEDI…TPSKSGSRRE (76 aa)) folds into the DAD domain. The span at 1117–1142 (DSSSITTISEQSENSNTSSITITTPS) shows a compositional bias: low complexity. Positions 1161 to 1192 (TSKSSDKDKEKEKEKEKQCESTESEDINKKDI) are enriched in basic and acidic residues.

This sequence belongs to the formin homology family. Diaphanous subfamily. In terms of assembly, interacts (via GBD/FH3 domain) with activated Rho-GTPases.

Its function is as follows. Formins play an important role in the nucleation of actin and the formation of linear actin filaments. The protein is Formin-F (forF) of Dictyostelium discoideum (Social amoeba).